A 74-amino-acid polypeptide reads, in one-letter code: ATP synthase subunit 9, mitochondrial (74 aa).

A run of 2 helical transmembrane segments spans residues 16–36 (GLIG…IGVS) and 50–70 (ILGF…AFLL).

This sequence belongs to the ATPase C chain family. As to quaternary structure, F-type ATPases have 2 components, CF(1) - the catalytic core - and CF(0) - the membrane proton channel. CF(1) has five subunits: alpha(3), beta(3), gamma(1), delta(1), epsilon(1). CF(0) has three main subunits: a, b and c.

The protein resides in the mitochondrion inner membrane. Mitochondrial membrane ATP synthase (F(1)F(0) ATP synthase or Complex V) produces ATP from ADP in the presence of a proton gradient across the membrane which is generated by electron transport complexes of the respiratory chain. F-type ATPases consist of two structural domains, F(1) - containing the extramembraneous catalytic core and F(0) - containing the membrane proton channel, linked together by a central stalk and a peripheral stalk. During catalysis, ATP synthesis in the catalytic domain of F(1) is coupled via a rotary mechanism of the central stalk subunits to proton translocation. Part of the complex F(0) domain. A homomeric c-ring of probably 10 subunits is part of the complex rotary element. The protein is ATP synthase subunit 9, mitochondrial (atp-9) of Neurospora crassa (strain ATCC 24698 / 74-OR23-1A / CBS 708.71 / DSM 1257 / FGSC 987).